A 132-amino-acid chain; its full sequence is Large ribosomal subunit protein bL21 (132 aa).

Positions 104-132 (GKAPSIGPRPPREKKPVVETSAEADDAAA) are disordered.

This sequence belongs to the bacterial ribosomal protein bL21 family. As to quaternary structure, part of the 50S ribosomal subunit. Contacts protein L20.

Its function is as follows. This protein binds to 23S rRNA in the presence of protein L20. The protein is Large ribosomal subunit protein bL21 of Rhodopseudomonas palustris (strain BisB18).